A 233-amino-acid chain; its full sequence is MNIDIIISADDIKEEKIKDKSIVVIDILRATSVIITALNNGCKEVVPVVEIEEALEKVKNNRKNYILGGERKALKIEGFDCSNSPLEYKSELVKGKTLVITTSNGTRAIKEALLAKDILIGALINGKAVAEKLISLKNDVVIINAGTYGEFSIDDFICSGYIIDCIAKDMEVKLSDISKVAKYLYNMNTNMEFIKEAKHFKRIMELGLFMDLEYCCKKDIVSIVPQYKNGIIK.

The protein belongs to the ComB family. The cofactor is Mg(2+).

The enzyme catalyses (2R)-O-phospho-3-sulfolactate + H2O = (2R)-3-sulfolactate + phosphate. In Clostridium tetani (strain Massachusetts / E88), this protein is Probable 2-phosphosulfolactate phosphatase.